The sequence spans 157 residues: Ribonuclease H (157 aa).

One can recognise an RNase H type-1 domain in the interval 4-146 (KRTEITIYTD…CDKLAVKASQ (143 aa)). Mg(2+) is bound by residues D13, E51, D73, and D138.

It belongs to the RNase H family. As to quaternary structure, monomer. Requires Mg(2+) as cofactor.

Its subcellular location is the cytoplasm. The enzyme catalyses Endonucleolytic cleavage to 5'-phosphomonoester.. Its function is as follows. Endonuclease that specifically degrades the RNA of RNA-DNA hybrids. This chain is Ribonuclease H, found in Trichodesmium erythraeum (strain IMS101).